We begin with the raw amino-acid sequence, 189 residues long: Photosystem I assembly protein Ycf4 (189 aa).

The next 2 helical transmembrane spans lie at 25–45 (SVYF…LAGL) and 62–82 (LVFI…SLAG).

It belongs to the Ycf4 family.

It localises to the cellular thylakoid membrane. Seems to be required for the assembly of the photosystem I complex. In Synechococcus sp. (strain JA-2-3B'a(2-13)) (Cyanobacteria bacterium Yellowstone B-Prime), this protein is Photosystem I assembly protein Ycf4.